The following is a 542-amino-acid chain: ABC transport system permease protein p69 (542 aa).

A run of 12 helical transmembrane segments spans residues 23 to 43, 77 to 97, 114 to 134, 140 to 160, 212 to 232, 236 to 256, 287 to 307, 350 to 370, 386 to 406, 412 to 432, 481 to 501, and 509 to 529; these read ALAI…FSGF, IFYV…FSYL, FTIF…NNLF, ATLT…TAFF, LSIA…GGTV, LVLI…ASVF, VMIY…LVQL, TQAI…GFLA, LLVI…PIIF, IIFV…TINF, LVVF…NFFE, and GTIT…LMAV. The ABC transmembrane type-1 domain maps to 349–526; sequence TTQAISLITL…VYLMVFEVIL (178 aa).

Belongs to the binding-protein-dependent transport system permease family.

Its subcellular location is the cell membrane. Functionally, probably part of a high-affinity transport system. The polypeptide is ABC transport system permease protein p69 (p69) (Mycoplasma pneumoniae (strain ATCC 29342 / M129 / Subtype 1) (Mycoplasmoides pneumoniae)).